We begin with the raw amino-acid sequence, 107 residues long: Large ribosomal subunit protein uL24 (107 aa).

This sequence belongs to the universal ribosomal protein uL24 family. Part of the 50S ribosomal subunit.

In terms of biological role, one of two assembly initiator proteins, it binds directly to the 5'-end of the 23S rRNA, where it nucleates assembly of the 50S subunit. Functionally, one of the proteins that surrounds the polypeptide exit tunnel on the outside of the subunit. This is Large ribosomal subunit protein uL24 from Neisseria gonorrhoeae (strain ATCC 700825 / FA 1090).